Reading from the N-terminus, the 304-residue chain is ATP phosphoribosyltransferase (304 aa).

It belongs to the ATP phosphoribosyltransferase family. Long subfamily. Mg(2+) is required as a cofactor.

Its subcellular location is the cytoplasm. It carries out the reaction 1-(5-phospho-beta-D-ribosyl)-ATP + diphosphate = 5-phospho-alpha-D-ribose 1-diphosphate + ATP. The protein operates within amino-acid biosynthesis; L-histidine biosynthesis; L-histidine from 5-phospho-alpha-D-ribose 1-diphosphate: step 1/9. Its activity is regulated as follows. Feedback inhibited by histidine. Catalyzes the condensation of ATP and 5-phosphoribose 1-diphosphate to form N'-(5'-phosphoribosyl)-ATP (PR-ATP). Has a crucial role in the pathway because the rate of histidine biosynthesis seems to be controlled primarily by regulation of HisG enzymatic activity. This chain is ATP phosphoribosyltransferase, found in Xylella fastidiosa (strain 9a5c).